Here is a 78-residue protein sequence, read N- to C-terminus: DNA-directed RNA polymerase subunit Rpo5 (78 aa).

Belongs to the archaeal Rpo5/eukaryotic RPB5 RNA polymerase subunit family. As to quaternary structure, part of the RNA polymerase complex.

It is found in the cytoplasm. The enzyme catalyses RNA(n) + a ribonucleoside 5'-triphosphate = RNA(n+1) + diphosphate. In terms of biological role, DNA-dependent RNA polymerase (RNAP) catalyzes the transcription of DNA into RNA using the four ribonucleoside triphosphates as substrates. The polypeptide is DNA-directed RNA polymerase subunit Rpo5 (Methanosarcina barkeri (strain Fusaro / DSM 804)).